Consider the following 216-residue polypeptide: CASP-like protein 2U1 (216 aa).

The tract at residues 1-30 (MKQDTEMGEATNGYIGTPGTVPVSHAGNDS) is disordered. Residues 1–37 (MKQDTEMGEATNGYIGTPGTVPVSHAGNDSGMRRMRT) are Cytoplasmic-facing. A helical transmembrane segment spans residues 38-58 (ASILMRLTAMALCVTALVTMV). The Extracellular portion of the chain corresponds to 59 to 86 (TDKQTHYFNFASTTIVKTAEYTNVLALK). Residues 87–107 (VFVYTNGVIAGYSLLQALWTI) traverse the membrane as a helical segment. Topologically, residues 108–128 (VAKSSYSTSKARLWTTFFLDQ) are cytoplasmic. A helical transmembrane segment spans residues 129-148 (FIVYVLIGVTGAATEVAYIA). Over 149–170 (EKGESDVAWPKQCNNFGRFCSQ) the chain is Extracellular. Residues 171–191 (VGASVIVCFVAILTLVFLAVL) form a helical membrane-spanning segment. The Cytoplasmic portion of the chain corresponds to 192–216 (SAKQLFIHERPSRTTRKDGYYTSNQ).

It belongs to the Casparian strip membrane proteins (CASP) family. Homodimer and heterodimers.

The protein resides in the cell membrane. The polypeptide is CASP-like protein 2U1 (Marchantia polymorpha (Common liverwort)).